The following is a 214-amino-acid chain: Putative germin-like protein 9-2 (214 aa).

A signal peptide spans 1 to 25 (MALSYYSLLLLLLAVWAPALTLVMA). N-linked (GlcNAc...) asparagine glycans are attached at residues Asn-44 and Asn-60. One can recognise a Cupin type-1 domain in the interval 56 to 202 (RKVFNTSSAP…SFKTDVPTIL (147 aa)). His-104, His-106, Glu-111, and His-150 together coordinate Mn(2+).

Belongs to the germin family. As to quaternary structure, oligomer (believed to be a pentamer but probably hexamer).

It localises to the secreted. The protein localises to the extracellular space. Its subcellular location is the apoplast. May play a role in plant defense. Probably has no oxalate oxidase activity even if the active site is conserved. This Oryza sativa subsp. japonica (Rice) protein is Putative germin-like protein 9-2.